The primary structure comprises 490 residues: GDP-fucose protein O-fucosyltransferase 2 (490 aa).

Positions 1–25 (MRGSWPRLGFPALLLLLHLLTGSDA) are cleaved as a signal peptide. Asparagine 29 and asparagine 79 each carry an N-linked (GlcNAc...) asparagine glycan. 81–85 (SEGFN) lines the GDP-beta-L-fucose pocket. The Proton acceptor role is filled by glutamate 82. Cysteine 203 and cysteine 226 form a disulfide bridge. Residue 336–338 (HLR) coordinates GDP-beta-L-fucose. Asparagine 368 carries N-linked (GlcNAc...) asparagine glycosylation. GDP-beta-L-fucose is bound by residues aspartate 418 and 435 to 436 (TF). A disulfide bond links cysteine 459 and cysteine 466.

This sequence belongs to the glycosyltransferase 68 family.

It localises to the endoplasmic reticulum. The protein localises to the golgi apparatus. The catalysed reaction is L-seryl-[protein] + GDP-beta-L-fucose = 3-O-(alpha-L-fucosyl)-L-seryl-[protein] + GDP + H(+). It catalyses the reaction L-threonyl-[protein] + GDP-beta-L-fucose = 3-O-(alpha-L-fucosyl)-L-threonyl-[protein] + GDP + H(+). It participates in protein modification; protein glycosylation. Its activity is regulated as follows. Does not require divalent metal ions for optimal activity. Its function is as follows. Catalyzes the reaction that attaches fucose through an O-glycosidic linkage to a conserved serine or threonine residue in the consensus sequence C1-X-X-S/T-C2 of thrombospondin type I repeats (TSRs) where C1 and C2 are the first and second cysteines of the repeat, respectively. O-fucosylates members of several protein families including the ADAMTS, the thrombospondin (TSP) and spondin families. This Drosophila melanogaster (Fruit fly) protein is GDP-fucose protein O-fucosyltransferase 2.